The following is a 352-amino-acid chain: Secretion system apparatus protein SsaU (352 aa).

A run of 4 helical transmembrane segments spans residues 34 to 54, 89 to 109, 144 to 164, and 176 to 196; these read LIAL…ILIE, LGAG…GVVI, LKVI…ASTF, and VLVV…FYIV.

This sequence belongs to the type III secretion exporter family.

It localises to the cell membrane. In terms of biological role, part of a type III secretion system. This is Secretion system apparatus protein SsaU (ssaU) from Salmonella typhimurium (strain LT2 / SGSC1412 / ATCC 700720).